Consider the following 643-residue polypeptide: Macrolide export ATP-binding/permease protein MacB (643 aa).

The ABC transporter domain maps to 6–244 (IELKGVSRVF…QVRSPFGVRH (239 aa)). 42–49 (GASGSGKS) is an ATP binding site. A run of 4 helical transmembrane segments spans residues 270–290 (VLTLLGIVIGVASVIVMLAIG), 518–538 (LTILLGSIAAISLLVGGIGVM), 569–589 (FLIEAVVVSALGGLIGVVIGL), and 606–626 (LMPIVWAFGCAFVTGLLFGYL).

This sequence belongs to the ABC transporter superfamily. Macrolide exporter (TC 3.A.1.122) family. Homodimer.

Its subcellular location is the cell inner membrane. Non-canonical ABC transporter that contains transmembrane domains (TMD), which form a pore in the inner membrane, and an ATP-binding domain (NBD), which is responsible for energy generation. Confers resistance against macrolides. The protein is Macrolide export ATP-binding/permease protein MacB of Wolinella succinogenes (strain ATCC 29543 / DSM 1740 / CCUG 13145 / JCM 31913 / LMG 7466 / NCTC 11488 / FDC 602W) (Vibrio succinogenes).